The sequence spans 105 residues: PTS system lactose-specific EIIA component (105 aa).

A PTS EIIA type-3 domain is found at 4–102; the sequence is EEMTLLGFEI…IHHLIELYKR (99 aa). The active-site Tele-phosphohistidine intermediate is histidine 78. A Phosphohistidine; by HPr modification is found at histidine 78. Aspartate 81 is a binding site for Mg(2+).

As to quaternary structure, homotrimer. The cofactor is Mg(2+).

Its subcellular location is the cytoplasm. Its function is as follows. The phosphoenolpyruvate-dependent sugar phosphotransferase system (sugar PTS), a major carbohydrate active transport system, catalyzes the phosphorylation of incoming sugar substrates concomitantly with their translocation across the cell membrane. The enzyme II LacEF PTS system is involved in lactose transport. This chain is PTS system lactose-specific EIIA component, found in Lactococcus lactis subsp. lactis (Streptococcus lactis).